Here is a 253-residue protein sequence, read N- to C-terminus: Endonuclease NucS (253 aa).

Positions 63–91 (IDDPDTDFTDGSSVGNSEEQGTDGSAHTA) are disordered. A compositionally biased stretch (polar residues) spans 71-87 (TDGSSVGNSEEQGTDGS).

This sequence belongs to the NucS endonuclease family.

The protein localises to the cytoplasm. In terms of biological role, cleaves both 3' and 5' ssDNA extremities of branched DNA structures. This chain is Endonuclease NucS, found in Corynebacterium kroppenstedtii (strain DSM 44385 / JCM 11950 / CIP 105744 / CCUG 35717).